The chain runs to 298 residues: Biphenyl-2,3-diol 1,2-dioxygenase (298 aa).

VOC domains follow at residues 5–119 (SLGY…IYYG) and 143–264 (GLGH…YGWS). Positions 146, 210, and 260 each coordinate Fe cation.

The protein belongs to the extradiol ring-cleavage dioxygenase family. Homooctamer. The enzyme is composed of two planar tetramers rotated at 45 degrees relative to each other, with a channel in the middle. Fe(2+) serves as cofactor.

The enzyme catalyses biphenyl-2,3-diol + O2 = 2-hydroxy-6-oxo-6-phenylhexa-2,4-dienoate + H(+). It functions in the pathway xenobiotic degradation; biphenyl degradation; 2-hydroxy-2,4-pentadienoate and benzoate from biphenyl: step 3/4. Shows a preference for catechols with groups immediately adjacent to the hydroxyl substituents. This Paraburkholderia xenovorans (strain LB400) protein is Biphenyl-2,3-diol 1,2-dioxygenase (bphC).